A 236-amino-acid chain; its full sequence is LexA repressor (236 aa).

A DNA-binding region (H-T-H motif) is located at residues 26–46 (FDEMKDALDLRSKSGIHRLII). Residues Ser157 and Lys195 each act as for autocatalytic cleavage activity in the active site.

This sequence belongs to the peptidase S24 family. As to quaternary structure, homodimer.

It carries out the reaction Hydrolysis of Ala-|-Gly bond in repressor LexA.. Functionally, represses a number of genes involved in the response to DNA damage (SOS response), including recA and lexA. In the presence of single-stranded DNA, RecA interacts with LexA causing an autocatalytic cleavage which disrupts the DNA-binding part of LexA, leading to derepression of the SOS regulon and eventually DNA repair. The polypeptide is LexA repressor (Methylocella silvestris (strain DSM 15510 / CIP 108128 / LMG 27833 / NCIMB 13906 / BL2)).